Here is a 422-residue protein sequence, read N- to C-terminus: MRIEDVRTVPGLSGFFFDDQQAIKDGATQTGFAYDGQPVTDGFDRIREAGEALIVEIELADGSIATGDCAAVQYSGAGGRDPLFRAEKYRPVVEGAVADALRGQDATQFGANATMLEEMSPQRSGGDQLHTAVRYGVSQALLNAAAQARGVTPTDVLADTYDTEPATSPVPVFGQSGDERRINAEKMLIKGVPVLPHGLFNSVEKVGENGEGLRDYLAWLSDRATALGPEPYSPRFHVDVYGILGKVFGPPYDRTEVTDYFETLREAAAPYPLQVEGPMDAGGRQAQITEMAELREGLADAGVDVDIVADEWCNTFEDVQAFVDAEAADLVQIKTPDLGGIQRSAEAVLYCDGTDTRAYVGGTCNETVTSARACAHVALATDAAQVLAKPGMGFDEGFMVVTNEMRRALARRDATQEVPADD.

Gln175 serves as a coordination point for (2S,3S)-3-methyl-L-aspartate. Mg(2+) contacts are provided by Asp239, Glu276, and Asp310. A (2S,3S)-3-methyl-L-aspartate-binding site is contributed by Gln332. Residue Lys334 is the Proton acceptor of the active site. 363–364 is a binding site for (2S,3S)-3-methyl-L-aspartate; that stretch reads TC.

This sequence belongs to the methylaspartate ammonia-lyase family. In terms of assembly, homodimer. The cofactor is Mg(2+).

It catalyses the reaction (2S,3S)-3-methyl-L-aspartate = mesaconate + NH4(+). It functions in the pathway amino-acid degradation; L-glutamate degradation via mesaconate pathway; acetate and pyruvate from L-glutamate: step 2/4. In terms of biological role, involved in the methylaspartate cycle. Catalyzes the formation of the alpha,beta-unsaturated bond by the reversible anti elimination of ammonia from L-threo-beta-methylaspartate (L-threo-(2S,3S)-3-methylaspartate) to give mesaconate. The sequence is that of Methylaspartate ammonia-lyase (mal) from Haloarcula marismortui (strain ATCC 43049 / DSM 3752 / JCM 8966 / VKM B-1809) (Halobacterium marismortui).